Consider the following 403-residue polypeptide: Argininosuccinate synthase (403 aa).

10–18 contributes to the ATP binding site; it reads AYSGGLDTS. Residues Tyr-88 and Ser-93 each coordinate L-citrulline. Residue Gly-118 coordinates ATP. L-aspartate is bound by residues Thr-120, Asn-124, and Asp-125. Asn-124 contacts L-citrulline. 5 residues coordinate L-citrulline: Arg-128, Ser-177, Ser-186, Glu-263, and Tyr-275.

This sequence belongs to the argininosuccinate synthase family. Type 1 subfamily. In terms of assembly, homotetramer.

The protein resides in the cytoplasm. It catalyses the reaction L-citrulline + L-aspartate + ATP = 2-(N(omega)-L-arginino)succinate + AMP + diphosphate + H(+). The protein operates within amino-acid biosynthesis; L-arginine biosynthesis; L-arginine from L-ornithine and carbamoyl phosphate: step 2/3. This is Argininosuccinate synthase from Clostridium perfringens (strain ATCC 13124 / DSM 756 / JCM 1290 / NCIMB 6125 / NCTC 8237 / Type A).